We begin with the raw amino-acid sequence, 496 residues long: Tyrosine-protein kinase Srms (496 aa).

Residues 55–116 (PRARLFRALY…PVTYLAKATP (62 aa)) enclose the SH3 domain. One can recognise an SH2 domain in the interval 124 to 216 (WYFSGISRAQ…LIQNPLLQPC (93 aa)). The 262-residue stretch at 234 to 495 (FVLRRKLGEG…AINRRLHLGL (262 aa)) folds into the Protein kinase domain. ATP-binding positions include 240–248 (LGEGFFGEV) and K262. Residue D354 is the Proton acceptor of the active site. Y384 is subject to Phosphotyrosine; by autocatalysis.

Belongs to the protein kinase superfamily. Tyr protein kinase family. SRC subfamily. In terms of assembly, interacts (via the SH2 and SH3 domains) with DOK1. Interacts with KHDRBS1/SAM68 and VIM. Higher expression in liver, lung, thymus and skin than in brain, kidney, heart and spleen. In skin, highly expressed in keratinocytes. Abundant in lung, liver, spleen, kidney and testis and is also detected in the cerebrum.

It localises to the cytoplasm. The enzyme catalyses L-tyrosyl-[protein] + ATP = O-phospho-L-tyrosyl-[protein] + ADP + H(+). Its function is as follows. Non-receptor tyrosine-protein kinase which phosphorylates DOK1 on tyrosine residues. Also phosphorylates KHDRBS1/SAM68 and VIM on tyrosine residues. Phosphorylation of KHDRBS1 is EGF-dependent. Phosphorylates OTUB1, promoting deubiquitination of RPTOR. The polypeptide is Tyrosine-protein kinase Srms (Srms) (Mus musculus (Mouse)).